The sequence spans 424 residues: Tyrosine--tRNA ligase 1 (424 aa).

Y37 serves as a coordination point for L-tyrosine. Positions 42-51 (PTADSLHLGH) match the 'HIGH' region motif. Residues Y175 and Q179 each contribute to the L-tyrosine site. Positions 235–239 (KFGKT) match the 'KMSKS' region motif. K238 lines the ATP pocket. The 58-residue stretch at 357–414 (ADLQQALVNAGLVPSRGQARTMISSNAVAINGEKQSEPEYLFTDSNRLFDRYTLLRRG) folds into the S4 RNA-binding domain.

Belongs to the class-I aminoacyl-tRNA synthetase family. TyrS type 1 subfamily. In terms of assembly, homodimer.

It is found in the cytoplasm. The catalysed reaction is tRNA(Tyr) + L-tyrosine + ATP = L-tyrosyl-tRNA(Tyr) + AMP + diphosphate + H(+). Functionally, catalyzes the attachment of tyrosine to tRNA(Tyr) in a two-step reaction: tyrosine is first activated by ATP to form Tyr-AMP and then transferred to the acceptor end of tRNA(Tyr). The sequence is that of Tyrosine--tRNA ligase 1 from Photorhabdus laumondii subsp. laumondii (strain DSM 15139 / CIP 105565 / TT01) (Photorhabdus luminescens subsp. laumondii).